We begin with the raw amino-acid sequence, 644 residues long: Core protein VP4 (644 aa).

The protein belongs to the orbivirus VP4 family.

The protein resides in the virion. Functionally, the VP4 protein is one of the five proteins (with VP1, VP3, VP6 and VP7) which form the inner capsid of the virus. This chain is Core protein VP4 (Segment-4), found in Bluetongue virus 13 (isolate USA) (BTV 13).